A 202-amino-acid polypeptide reads, in one-letter code: Segregation and condensation protein B (202 aa).

It belongs to the ScpB family. As to quaternary structure, homodimer. Homodimerization may be required to stabilize the binding of ScpA to the Smc head domains. Component of a cohesin-like complex composed of ScpA, ScpB and the Smc homodimer, in which ScpA and ScpB bind to the head domain of Smc. The presence of the three proteins is required for the association of the complex with DNA.

Its subcellular location is the cytoplasm. Participates in chromosomal partition during cell division. May act via the formation of a condensin-like complex containing Smc and ScpA that pull DNA away from mid-cell into both cell halves. The polypeptide is Segregation and condensation protein B (Clostridium acetobutylicum (strain ATCC 824 / DSM 792 / JCM 1419 / IAM 19013 / LMG 5710 / NBRC 13948 / NRRL B-527 / VKM B-1787 / 2291 / W)).